The primary structure comprises 125 residues: Small ribosomal subunit protein uS12m (125 aa).

A disordered region spans residues Met1–Leu26. Positions Leu8–Lys23 are enriched in basic residues.

It belongs to the universal ribosomal protein uS12 family.

It is found in the mitochondrion. The polypeptide is Small ribosomal subunit protein uS12m (RPS12) (Prototheca wickerhamii).